Consider the following 953-residue polypeptide: MTAAENVCYTLINVPMDSEPPSEISLKNDLEKGDVKSKTEALKKVIIMILNGEKLPGLLMTIIRFVLPLQDHTIKKLLLVFWEIVPKTTPDGRLLHEMILVCDAYRKDLQHPNEFIRGSTLRFLCKLKEAELLEPLMPAIRACLEHRHSYVRRNAVLAIYTIYRNFEHLIPDAPELIHDFLVNEKDASCKRNAFMMLIHADQDRALDYLSTCIDQVQTFGDILQLVIVELIYKVCHANPSERARFIRCIYNLLQSSSPAVKYEAAGTLVTLSSAPTAIKAAAQCYIDLIIKESDNNVKLIVLDRLVELKEHPAHERVLQDLVMDILRVLSTPDLEVRKKTLQLALDLVSSRNVEELVIVLKKEVIKTNNVSEHEDTDKYRQLLVRTLHSCSVRFPDMAANVIPVLMEFLSDSNEAAAADVLEFVREAIQRFDNLRMLIVEKMLEVFHAIKSVKIYRGALWILGEYCSTKEDIQSVMTEVRRSLGEIPIVESEIKKEAGELKPEEEITVGPVQKLVTEMGTYATQSALSSSRPTKKEEDRPPLRGFLLDGDFFVAASLATTLTKIALRYVALVQEKKKQNSFVAEAMLLMATILHLGKSSLPKKPITDDDVDRISLCLKVLSECSPLMNDIFNKECRQSLSQMLSAKLEEEKLSQKKESEKRNVTVQPDDPISFMQLTAKNEMNCKEDQFQLSLLAAMGNTQRKEAADPLASKLNKVTQLTGFSDPVYAEAYVHVNQYDIVLDVLVVNQTSDTLQNCTLELATLGDLKLVEKPSPLTLAPHDFANIKANVKVASTENGIIFGNIVYDVSGAASDRNCVVLSDIHIDIMDYIQPATCTDAEFRQMWAEFEWENKVTVNTNMTDLNDYLQHILKSTNMKCLTPEKALSGYCGFMAANLYARSIFGEDALANVSIEKPVHQGPDAAVTGHIRIRAKSQGMALSLGDKINLSQKKTSL.

Position 2 is an N-acetylthreonine (Thr2). HEAT repeat units lie at residues 96–131 (HEMILVCDAYRKDLQHPNEFIRGSTLRFLCKLKEAE), 132–168 (LLEPLMPAIRACLEHRHSYVRRNAVLAIYTIYRNFEH), 240–276 (SERARFIRCIYNLLQSSSPAVKYEAAGTLVTLSSAPT), 277–314 (AIKAAAQCYIDLIIKESDNNVKLIVLDRLVELKEHPAH), 316–353 (RVLQDLVMDILRVLSTPDLEVRKKTLQLALDLVSSRNV), and 396–433 (DMAANVIPVLMEFLSDSNEAAAADVLEFVREAIQRFDN). N6-acetyllysine is present on Lys494.

Oligomeric complex that consists of at least the alpha, beta, beta', gamma, delta, epsilon and zeta subunits. Interacts with CAPN8. Interacts with SCYL1 and PRKCE. Interacts with COPG1. Interacts with ARF1 (myristoylated); this interaction is required for binding of COPB1 to Golgi membranes. Interacts (via trunk domain) with ARF1 (via switch I region); the interaction is direct. Interacts with KCNK2 (via N-terminus); this interaction increases the channel-mediated whole cell currents and promotes plasma membrane expression of KCNK2. Interacts with STX17. Interacts with TMEM115. Interacts with TMEM41B. In terms of processing, proteolytically cleaved between Ser-528 and Ser-529 by CAPN8. In terms of tissue distribution, predominantly expressed in the upper one-third of the oxyntic mucosa and in most regions of the pyloric mucosa. Ubiquitously expressed including platelet, liver, heart, spleen, lung and kidney.

The protein localises to the cytoplasm. It is found in the golgi apparatus membrane. It localises to the cytoplasmic vesicle. The protein resides in the COPI-coated vesicle membrane. Its subcellular location is the cell membrane. The protein localises to the endoplasmic reticulum-Golgi intermediate compartment. Functionally, the coatomer is a cytosolic protein complex that binds to dilysine motifs and reversibly associates with Golgi non-clathrin-coated vesicles, which further mediate biosynthetic protein transport from the ER, via the Golgi up to the trans Golgi network. Coatomer complex is required for budding from Golgi membranes, and is essential for the retrograde Golgi-to-ER transport of dilysine-tagged proteins. In mammals, the coatomer can only be recruited by membranes associated to ADP-ribosylation factors (ARFs), which are small GTP-binding proteins; the complex also influences the Golgi structural integrity, as well as the processing, activity, and endocytic recycling of LDL receptors. Involved in the Golgi disassembly and reassembly processes during cell cycle. Involved in autophagy by playing a role in early endosome function. Plays a role in organellar compartmentalization of secretory compartments including endoplasmic reticulum (ER)-Golgi intermediate compartment (ERGIC), Golgi, trans-Golgi network (TGN) and recycling endosomes, and in biosynthetic transport of CAV1. Plays a functional role in facilitating the transport of kappa-type opioid receptor mRNAs into axons and enhances translation of these proteins in cortical neurons. Required for limiting lipid storage in lipid droplets. Involved in lipid homeostasis by regulating the presence of perilipin family members PLIN2 and PLIN3 at the lipid droplet surface and promoting the association of adipocyte triglyceride lipase (PNPLA2) with the lipid droplet surface to mediate lipolysis. This Mus musculus (Mouse) protein is Coatomer subunit beta (Copb1).